A 335-amino-acid polypeptide reads, in one-letter code: POU domain, class 5, transcription factor 2 (335 aa).

The tract at residues Met1 to Pro23 is disordered. The 75-residue stretch at Asp113–Asp187 folds into the POU-specific domain. Positions Arg205–Thr264 form a DNA-binding region, homeobox.

It belongs to the POU transcription factor family. Class-5 subfamily. In terms of tissue distribution, highly restricted to adult testis.

It localises to the nucleus. Functionally, transcription factor that binds preferentially to the octamer motif (5'-ATGTTAAT-3'). May exert a regulatory function in meiotic events that are required for terminal differentiation of male germ cell. The chain is POU domain, class 5, transcription factor 2 (Pou5f2) from Rattus norvegicus (Rat).